Consider the following 414-residue polypeptide: Arrestin domain-containing protein 3 (414 aa).

2 short sequence motifs (PPxY motif) span residues 346–349 (PPSY) and 391–394 (PPLY). The interval 393–414 (LYSEIDPNPDQSSEDRPSCPSR) is disordered. Residues 405–414 (SEDRPSCPSR) are compositionally biased toward basic and acidic residues.

This sequence belongs to the arrestin family. Interacts (via PPxY motifs) with NEDD4 (via WW domains). Interacts with ADRB2. Interacts with ADRB3. Interacts with HGS (via PPxY motifs). Does not bind TXN (thioredoxin). Interacts with ITCH.

It localises to the cytoplasm. Its subcellular location is the cell membrane. The protein resides in the lysosome. It is found in the endosome. The protein localises to the early endosome. In terms of biological role, adapter protein that plays a role in regulating cell-surface expression of adrenergic receptors and probably also other G protein-coupled receptors. Plays a role in NEDD4-mediated ubiquitination and endocytosis af activated ADRB2 and subsequent ADRB2 degradation. May recruit NEDD4 to ADRB2. Alternatively, may function as adapter protein that does not play a major role in recruiting NEDD4 to ADRB2, but rather plays a role in a targeting ADRB2 to endosomes. The protein is Arrestin domain-containing protein 3 (Arrdc3) of Rattus norvegicus (Rat).